Consider the following 328-residue polypeptide: Lytic polysaccharide monooxygenase aasB (328 aa).

The signal sequence occupies residues 1–18 (MKAFFAISASTLLATVHG). His19 contributes to the Cu(2+) binding site. A disulfide bridge links Cys40 with Cys43. N-linked (GlcNAc...) asparagine glycosylation occurs at Asn54. 6 cysteine pairs are disulfide-bonded: Cys66–Cys245, Cys102–Cys203, Cys118–Cys145, Cys153–Cys161, Cys167–Cys173, and Cys181–Cys192. Position 109 (His109) interacts with Cu(2+). A Cu(2+)-binding site is contributed by Tyr242. Asn306 carries N-linked (GlcNAc...) asparagine glycosylation.

The protein belongs to the polysaccharide monooxygenase AA13 family. Cu(2+) serves as cofactor.

It localises to the secreted. The enzyme catalyses starch + reduced acceptor + O2 = D-glucono-1,5-lactone-terminated malto-oligosaccharides + short-chain malto-oligosaccharides + acceptor + H2O.. In terms of biological role, lytic polysaccharide monooxygenase involved in breakdown of granular resistant starch. The polypeptide is Lytic polysaccharide monooxygenase aasB (Emericella nidulans (strain FGSC A4 / ATCC 38163 / CBS 112.46 / NRRL 194 / M139) (Aspergillus nidulans)).